The following is a 428-amino-acid chain: Enolase (428 aa).

Residue Q173 coordinates (2R)-2-phosphoglycerate. The active-site Proton donor is the E217. Residues D253, E294, and D320 each contribute to the Mg(2+) site. 4 residues coordinate (2R)-2-phosphoglycerate: K345, R374, S375, and K396. K345 acts as the Proton acceptor in catalysis.

Belongs to the enolase family. It depends on Mg(2+) as a cofactor.

It localises to the cytoplasm. Its subcellular location is the secreted. It is found in the cell surface. The enzyme catalyses (2R)-2-phosphoglycerate = phosphoenolpyruvate + H2O. It functions in the pathway carbohydrate degradation; glycolysis; pyruvate from D-glyceraldehyde 3-phosphate: step 4/5. In terms of biological role, catalyzes the reversible conversion of 2-phosphoglycerate (2-PG) into phosphoenolpyruvate (PEP). It is essential for the degradation of carbohydrates via glycolysis. In Methanosarcina barkeri (strain Fusaro / DSM 804), this protein is Enolase.